Consider the following 205-residue polypeptide: Recombination protein RecR (205 aa).

The segment at 59–74 adopts a C4-type zinc-finger fold; it reads CARCNTFCEGGLCDIC. The region spanning 82 to 177 is the Toprim domain; that stretch reads RRLMVVHMPA…KVSRLSQGIP (96 aa).

The protein belongs to the RecR family.

May play a role in DNA repair. It seems to be involved in an RecBC-independent recombinational process of DNA repair. It may act with RecF and RecO. In Neisseria gonorrhoeae (strain ATCC 700825 / FA 1090), this protein is Recombination protein RecR.